Reading from the N-terminus, the 347-residue chain is Transcription factor EC (347 aa).

The interval M1–S119 is necessary for transcriptional transactivation. The bHLH domain occupies Q139–L192. Residues P271–L347 form a necessary for transcriptional transactivation region. Residues D319–L347 form a disordered region. The segment covering S326–S341 has biased composition (low complexity).

The protein belongs to the MiT/TFE family. Homodimer. Forms heterodimers with TFE3. Forms heterodimers with MITF. Interacts with MITF. Expressed moderately in spleen, kidney, bone marrow, small intestine and leukocytes. Expressed weakly in testis, trachea and colon.

Its subcellular location is the nucleus. Transcriptional regulator that acts as a repressor or an activator. Acts as a transcriptional repressor on minimal promoter containing element F (that includes an E-box sequence). Binds to element F in an E-box sequence-specific manner. Acts as a transcriptional transactivator on the proximal promoter region of the tartrate-resistant acid phosphatase (TRAP) E-box containing promoter. Collaborates with MITF in target gene activation. Acts as a transcriptional repressor on minimal promoter containing mu E3 enhancer sequence. Binds to mu E3 DNA sequence of the immunoglobulin heavy-chain gene enhancer. Binds DNA in a homo- or heterodimeric form. The chain is Transcription factor EC (TFEC) from Homo sapiens (Human).